The chain runs to 93 residues: uncharacterized protein (93 aa).

The next 3 membrane-spanning stretches (helical) occupy residues 9–29 (ITVIGYIAGTLTTFASLPQLI), 40–60 (ISLAFVITFTTGLTLWLIYGI), and 66–86 (PIIVFNILSLMFWIPITYLKI).

It localises to the cell membrane. This is an uncharacterized protein from Methanocaldococcus jannaschii (strain ATCC 43067 / DSM 2661 / JAL-1 / JCM 10045 / NBRC 100440) (Methanococcus jannaschii).